We begin with the raw amino-acid sequence, 482 residues long: MVISAERTNVGFITQVIGPVVDIEFPSGKMPAIYNALRIQGKNAAGLDVAVTCEVQQLLGDNRVRAVAMSSTDGLVRGMEVVDTGAPISVPVGTATLGRIFNVLGEPVDEKGAVNATETLPIHRPAPSFTQLETKPSVFETGIKVIDLLTPYRRGGKIGLFGGAGVGKTVIMMELINNIATQHGGVSVFAGVGERTREGNDLYNEMIESGVIDKDDPSKSKIALVYGQMNEPPGARMRVGLSGLTMAEYFRDVNKQDVLLFIDNIFRFVQAGSEVSALLGRMPSAVGYQPTLGTDVGALQERITSTTEGSITSIQAVYVPADDLTDPAPATTFAHLDGTTVLSRSLAAKGIYPAVDPLGSTSNMLQPDIVGEEHYQTARAVQATLQRYKELQDIIAILGLDELSEEDRLTVARARKIERFLSQPFFVAEVFTGAPGKYVTLEETIKGFQMILSGELDDLPEQAFYMVGNIEEAKAKAEKLKA.

An ATP-binding site is contributed by 162–169 (GGAGVGKT).

F-type ATPases have 2 components, CF(1) - the catalytic core - and CF(0) - the membrane proton channel. CF(1) has five subunits: alpha(3), beta(3), gamma(1), delta(1), epsilon(1). CF(0) has four main subunits: a(1), b(1), b'(1) and c(9-12).

The protein localises to the cellular thylakoid membrane. It catalyses the reaction ATP + H2O + 4 H(+)(in) = ADP + phosphate + 5 H(+)(out). Inhibited by dicyclohexylcarbodiimide. Functionally, produces ATP from ADP in the presence of a proton gradient across the membrane. The catalytic sites are hosted primarily by the beta subunits. The complex from the organism is particularly stable to disruption and remains functional after 6 hrs at 55 degrees Celsius. This is ATP synthase subunit beta from Thermosynechococcus vestitus (strain NIES-2133 / IAM M-273 / BP-1).